A 344-amino-acid chain; its full sequence is Cytochrome c biogenesis protein CcsA (344 aa).

A run of 8 helical transmembrane segments spans residues 21 to 41 (NVAF…AAFP), 45 to 65 (LLSE…AALL), 80 to 100 (LYES…LALH), 106 to 126 (WVGV…ALAL), 151 to 171 (VMLL…AFLI), 252 to 272 (LIGL…VWAN), 287 to 307 (WALI…TKGW), and 313 to 333 (ALLA…VNFL).

Belongs to the CcmF/CycK/Ccl1/NrfE/CcsA family. In terms of assembly, may interact with ccs1.

The protein resides in the cellular thylakoid membrane. Functionally, required during biogenesis of c-type cytochromes (cytochrome c6 and cytochrome f) at the step of heme attachment. The chain is Cytochrome c biogenesis protein CcsA from Synechococcus sp. (strain JA-3-3Ab) (Cyanobacteria bacterium Yellowstone A-Prime).